Consider the following 525-residue polypeptide: DNA damage-binding protein cmr1 (525 aa).

Positions 34–50 (TGVFTSNMPRGTSANQS) are enriched in polar residues. Disordered regions lie at residues 34–103 (TGVF…ERAK), 214–240 (DASQEKPTSAVKNEDDEDDEDDDDPDP), and 282–301 (TSSVEKYAPESTSDDVPISG). Residues 83–102 (EIAKRKADEEYDRRQEEERA) are compositionally biased toward basic and acidic residues. A WD 1 repeat occupies 182–223 (ITPERIYSMTFHPSEAKPVIFAGDKMGHLGILDASQEKPTSA). Acidic residues predominate over residues 227–239 (EDDEDDEDDDDPD). WD repeat units lie at residues 247–287 (PHTR…SVEK), 339–379 (LSEK…HTDP), 384–425 (EHQS…SSWK), 448–491 (GRWV…LAQL), and 494–525 (DGITAVPAVAVFHRSKNWVAGGTASGKICLWM).

It belongs to the WD repeat DDB2/WDR76 family.

Its function is as follows. DNA-binding protein that binds to both single- and double-stranded DNA. Binds preferentially to UV-damaged DNA. May be involved in DNA-metabolic processes. This is DNA damage-binding protein cmr1 from Emericella nidulans (strain FGSC A4 / ATCC 38163 / CBS 112.46 / NRRL 194 / M139) (Aspergillus nidulans).